Here is a 404-residue protein sequence, read N- to C-terminus: Phosphopentomutase (404 aa).

Mn(2+) contacts are provided by D10, D297, H302, D338, H339, and H350.

The protein belongs to the phosphopentomutase family. Mn(2+) is required as a cofactor.

The protein localises to the cytoplasm. It catalyses the reaction 2-deoxy-alpha-D-ribose 1-phosphate = 2-deoxy-D-ribose 5-phosphate. The catalysed reaction is alpha-D-ribose 1-phosphate = D-ribose 5-phosphate. Its pathway is carbohydrate degradation; 2-deoxy-D-ribose 1-phosphate degradation; D-glyceraldehyde 3-phosphate and acetaldehyde from 2-deoxy-alpha-D-ribose 1-phosphate: step 1/2. Its function is as follows. Isomerase that catalyzes the conversion of deoxy-ribose 1-phosphate (dRib-1-P) and ribose 1-phosphate (Rib-1-P) to deoxy-ribose 5-phosphate (dRib-5-P) and ribose 5-phosphate (Rib-5-P), respectively. This Colwellia psychrerythraea (strain 34H / ATCC BAA-681) (Vibrio psychroerythus) protein is Phosphopentomutase.